Consider the following 704-residue polypeptide: RCC1 domain-containing protein DDB_G0295713 (704 aa).

RCC1 repeat units follow at residues 1 to 48 and 69 to 120; these read MYCW…VKGE and KNRC…ITDQ. Residues 221–246 form a disordered region; sequence YNNNNNNNNNNNNNNNNNNNNNNNNN. Low complexity predominate over residues 222 to 246; sequence NNNNNNNNNNNNNNNNNNNNNNNNN. Residues 298–348 form an RCC1 3 repeat; the sequence is QNQVYGWGENLNGQLGIEGIDYSTEPILIELPLVEIKHISSGAYHSAFVTN. Residues 412 to 431 show a composition bias toward basic and acidic residues; sequence IKDKNENNETKHTNKNKDNH. The disordered stretch occupies residues 412 to 458; it reads IKDKNENNETKHTNKNKDNHDDDDESDHSDDDHHDDDDNDKDSQGIN. The span at 432 to 451 shows a compositional bias: acidic residues; that stretch reads DDDDESDHSDDDHHDDDDND. Residues 668–698 adopt a coiled-coil conformation; the sequence is IEQTSTQVANSENENENEIEMKMKMKKNEMK.

The polypeptide is RCC1 domain-containing protein DDB_G0295713 (Dictyostelium discoideum (Social amoeba)).